Here is a 78-residue protein sequence, read N- to C-terminus: Antitoxin VapB2 (78 aa).

Residues 4–44 (AKIFMNGQSQAVRLPKEFRFSVKEVSVIPLGKGIVLQPLPN) form the SpoVT-AbrB domain.

The protein belongs to the VapB family. Forms complexes with VapC2; probably VapC2(4):VapB2(2) in the absence of DNA, and VapC2(4):VapB2(4) in the presence of DNA. Crystallizes as heterodimers with stoichiometry VapC2(4):VapB2(4) in the presence of its probable promoter DNA. The heterodimers are in contact via alternative VapC-VapC and VapB-VapB interactions. This subunit contacts DNA.

Functionally, antitoxin component of a type II toxin-antitoxin (TA) system. Upon expression in E.coli or S.cerevisiae neutralizes the effect of cognate toxin VapC2, partially inhibits the RNase activity of VapC2. The sequence is that of Antitoxin VapB2 (vapB2) from Rickettsia felis (strain ATCC VR-1525 / URRWXCal2) (Rickettsia azadi).